The chain runs to 1246 residues: Myosin-1 (1246 aa).

A disordered region spans residues 1 to 41 (MGHSRRPVGGEKKSRGFGRSKAVADVGDGRQTGGKPQVKKA). Positions 51–730 (IGVSDLTLLS…TLFALEAMRD (680 aa)) constitute a Myosin motor domain. 144–151 (GESGAGKT) is a binding site for ATP. Serine 372 bears the Phosphoserine mark. The interval 419-501 (SIGILDIYGF…PGVFAALNDA (83 aa)) is actin-binding. 2 consecutive IQ domains span residues 734 to 754 (HNMA…RIEC) and 755 to 780 (AIRI…QGHK). The TH1 domain occupies 788 to 976 (RRRMSLLGSR…TIHTSAGEPP (189 aa)). Over residues 956-970 (GSSNVDTYKSSTIHT) the composition is skewed to polar residues. Disordered regions lie at residues 956-1080 (GSSN…PKKP) and 1127-1246 (WTPQ…DDEW). 2 stretches are compositionally biased toward pro residues: residues 1033-1045 (APQP…PVPQ) and 1065-1078 (APPP…PAPK). The SH3 domain occupies 1077-1138 (PKKPMAKVLY…PQAYLEEQKA (62 aa)). Composition is skewed to low complexity over residues 1151–1166 (TPAT…AKAK) and 1214–1228 (NSAS…LAEA). Residues 1229–1240 (LRQRQEAMHGKQ) show a composition bias toward basic and acidic residues.

It belongs to the TRAFAC class myosin-kinesin ATPase superfamily. Myosin family. Post-translationally, phosphorylation of the TEDS site (Ser-372) is required for the polarization of the actin cytoskeleton. Phosphorylation probably activates the myosin-I ATPase activity.

The protein resides in the cytoplasm. It is found in the cytoskeleton. It localises to the actin patch. Its function is as follows. Type-I myosin implicated in the organization of the actin cytoskeleton. Required for proper actin cytoskeleton polarization. At the cell cortex, assembles in patch-like structures together with proteins from the actin-polymerizing machinery and promotes actin assembly. Functions as actin nucleation-promoting factor (NPF) for the Arp2/3 complex. Plays an important role in polarized growth, spore germination, hyphal morphogenesis, and septal wall formation. This is Myosin-1 (myoA) from Aspergillus terreus (strain NIH 2624 / FGSC A1156).